Consider the following 85-residue polypeptide: UPF0291 protein SPH_1589 (85 aa).

The tract at residues 62-85 is disordered; that stretch reads TPEKLRQVQREKGLHGRSLDDPNS.

It belongs to the UPF0291 family.

The protein localises to the cytoplasm. This Streptococcus pneumoniae (strain Hungary19A-6) protein is UPF0291 protein SPH_1589.